We begin with the raw amino-acid sequence, 378 residues long: Quinolinate synthase (378 aa).

Residues histidine 59 and serine 80 each contribute to the iminosuccinate site. Residue cysteine 125 participates in [4Fe-4S] cluster binding. Iminosuccinate contacts are provided by residues 151–153 (YAN) and serine 168. Cysteine 212 is a [4Fe-4S] cluster binding site. Iminosuccinate contacts are provided by residues 238–240 (HPE) and threonine 255. A [4Fe-4S] cluster-binding site is contributed by cysteine 309.

The protein belongs to the quinolinate synthase family. Type 1 subfamily. It depends on [4Fe-4S] cluster as a cofactor.

The protein resides in the cytoplasm. The catalysed reaction is iminosuccinate + dihydroxyacetone phosphate = quinolinate + phosphate + 2 H2O + H(+). The protein operates within cofactor biosynthesis; NAD(+) biosynthesis; quinolinate from iminoaspartate: step 1/1. Functionally, catalyzes the condensation of iminoaspartate with dihydroxyacetone phosphate to form quinolinate. This is Quinolinate synthase from Burkholderia cenocepacia (strain HI2424).